The primary structure comprises 160 residues: Cytochrome b6-f complex subunit 4 (160 aa).

Transmembrane regions (helical) follow at residues 36–56 (LLYI…GLAV), 95–115 (LLGI…PFIE), and 128–148 (IAMS…IGAC).

The protein belongs to the cytochrome b family. PetD subfamily. In terms of assembly, the 4 large subunits of the cytochrome b6-f complex are cytochrome b6, subunit IV (17 kDa polypeptide, PetD), cytochrome f and the Rieske protein, while the 4 small subunits are PetG, PetL, PetM and PetN. The complex functions as a dimer.

Its subcellular location is the cellular thylakoid membrane. Its function is as follows. Component of the cytochrome b6-f complex, which mediates electron transfer between photosystem II (PSII) and photosystem I (PSI), cyclic electron flow around PSI, and state transitions. The polypeptide is Cytochrome b6-f complex subunit 4 (Prochlorococcus marinus (strain MIT 9301)).